The sequence spans 251 residues: Probable transcriptional regulatory protein cbdbA400 (251 aa).

It belongs to the TACO1 family.

The protein resides in the cytoplasm. This is Probable transcriptional regulatory protein cbdbA400 from Dehalococcoides mccartyi (strain CBDB1).